The sequence spans 381 residues: NF-kappa-B inhibitor-like protein 1 (381 aa).

The disordered stretch occupies residues 1 to 34 (MSNPSPQVPEEEASTSVCRPKSSMASTSRRQRRE). ANK repeat units follow at residues 64-93 (GQPPPLHRACARHDAPALCLLLRLGADPAH) and 97-130 (HGDTALHAAARQGPDAYTDFFLPLLSRCPSAMGI). 2 disordered regions span residues 129–167 (GIKNKDGETPGQILGWGPPWDSAEEEEEDDASKEREWRQ) and 186–294 (GDAS…RGSL). S150 is modified (phosphoserine). Residues 150-159 (SAEEEEEDDA) are compositionally biased toward acidic residues. Composition is skewed to basic and acidic residues over residues 218–228 (REAEGSRRPPR) and 238–287 (QQEE…EHPR).

In terms of assembly, interacts with CACTIN (via N-terminal domain); the interaction occurs in a proinflammatory-independent manner. As to expression, detected in different cell types including monocytes, T-cells, B-cells and hepatocytes.

It is found in the nucleus. Its function is as follows. Involved in the regulation of innate immune response. Acts as negative regulator of Toll-like receptor and interferon-regulatory factor (IRF) signaling pathways. Contributes to the negative regulation of transcriptional activation of NF-kappa-B target genes in response to endogenous proinflammatory stimuli. In Homo sapiens (Human), this protein is NF-kappa-B inhibitor-like protein 1 (NFKBIL1).